We begin with the raw amino-acid sequence, 283 residues long: Malonyl-[acyl-carrier protein] O-methyltransferase (283 aa).

It belongs to the methyltransferase superfamily.

It catalyses the reaction malonyl-[ACP] + S-adenosyl-L-methionine = malonyl-[ACP] methyl ester + S-adenosyl-L-homocysteine. It functions in the pathway cofactor biosynthesis; biotin biosynthesis. Converts the free carboxyl group of a malonyl-thioester to its methyl ester by transfer of a methyl group from S-adenosyl-L-methionine (SAM). It allows to synthesize pimeloyl-ACP via the fatty acid synthetic pathway. This Acetivibrio thermocellus (strain ATCC 27405 / DSM 1237 / JCM 9322 / NBRC 103400 / NCIMB 10682 / NRRL B-4536 / VPI 7372) (Clostridium thermocellum) protein is Malonyl-[acyl-carrier protein] O-methyltransferase.